The primary structure comprises 374 residues: Acid phosphatase-like protein XcAP-1 (374 aa).

A signal peptide spans Thr-1–Ala-17. Val-25 lines the serotonin pocket. 3 disulfide bridges follow: Cys-144/Cys-372, Cys-165/Cys-219, and Cys-345/Cys-349. 4 residues coordinate serotonin: Asp-245, Asp-249, Asn-271, and Gln-283.

Belongs to the histidine acid phosphatase family.

It is found in the secreted. In terms of biological role, probably modulates blood feeding of fleas on vertebrate species by binding and sequestering different mediators involved in the host response. Binds biogenic amines: serotonin, adrenaline and noradrenaline. Binds leukotriene C4. Does not bind histamine, leukotriene B4, leukotriene D4, leukotriene E4, ADP, and stable analogs of thromboxane A2: U-46619 and cTXA2. This is Acid phosphatase-like protein XcAP-1 from Xenopsylla cheopis (Oriental rat flea).